Here is a 384-residue protein sequence, read N- to C-terminus: MTKLVSKIFKRLISQSQYMSSSTTSNLPAASQTSNLESQLLSSAPPPAKKKRGSALLWYLVGFTTYGLGETYKFLQTQVEHLDSRKQCLEMKPMKLNTTKDLDGLGFRRVVCKGIFDEQRSIYVGPKPRSMSKSSEIGFYVITPLLPIPNEPNSMKSPILVNRGWVPSDWKENSLESLGTGGLVAAAKESRKANKLLSSQQSLLSKFWYKLNNPMIVEDQVSRAMHVEVVGVVRKSETPGIYTLVNYPSSLAWFYLDVPKLALAMGFGEDTMYIESTYTDMDESRTYPVPRDVENLTRSKDIPLDYHLYTVLWHWSSLTCFIKASSILMRRLTKSDPIGVEPILIPISILVFICTKIYSLRNLFCKIDTIGVGCVTKLDTGKVK.

3 consecutive transmembrane segments (helical) span residues 55–75, 302–322, and 338–358; these read ALLW…YKFL, IPLD…TCFI, and IGVE…TKIY.

The protein belongs to the SURF1 (TC 3.D.4.8) family.

Its subcellular location is the mitochondrion inner membrane. May be involved in the biogenesis of the COX complex. The chain is Surfeit locus protein 1-like from Arabidopsis thaliana (Mouse-ear cress).